Reading from the N-terminus, the 353-residue chain is Photosystem II protein D1 (353 aa).

Thr2 carries the post-translational modification N-acetylthreonine. The residue at position 2 (Thr2) is a Phosphothreonine. Transmembrane regions (helical) follow at residues Tyr29–Ser46, His118–Leu133, and Trp142–Ala156. His118 provides a ligand contact to chlorophyll a. Tyr126 provides a ligand contact to pheophytin a. 2 residues coordinate [CaMn4O5] cluster: Asp170 and Glu189. Residues Phe197–Leu218 form a helical membrane-spanning segment. His198 contacts chlorophyll a. Residues His215 and Ser264–Phe265 contribute to the a quinone site. His215 contributes to the Fe cation binding site. His272 is a binding site for Fe cation. The chain crosses the membrane as a helical span at residues Phe274 to Leu288. [CaMn4O5] cluster contacts are provided by His332, Glu333, Asp342, and Ala344. Positions Ala345–Gly353 are excised as a propeptide.

The protein belongs to the reaction center PufL/M/PsbA/D family. PSII is composed of 1 copy each of membrane proteins PsbA, PsbB, PsbC, PsbD, PsbE, PsbF, PsbH, PsbI, PsbJ, PsbK, PsbL, PsbM, PsbT, PsbX, PsbY, PsbZ, Psb30/Ycf12, at least 3 peripheral proteins of the oxygen-evolving complex and a large number of cofactors. It forms dimeric complexes. Requires The D1/D2 heterodimer binds P680, chlorophylls that are the primary electron donor of PSII, and subsequent electron acceptors. It shares a non-heme iron and each subunit binds pheophytin, quinone, additional chlorophylls, carotenoids and lipids. D1 provides most of the ligands for the Mn4-Ca-O5 cluster of the oxygen-evolving complex (OEC). There is also a Cl(-1) ion associated with D1 and D2, which is required for oxygen evolution. The PSII complex binds additional chlorophylls, carotenoids and specific lipids. as cofactor. Post-translationally, tyr-161 forms a radical intermediate that is referred to as redox-active TyrZ, YZ or Y-Z. C-terminally processed by CTPA; processing is essential to allow assembly of the oxygen-evolving complex and thus photosynthetic growth.

Its subcellular location is the plastid. It localises to the chloroplast thylakoid membrane. The catalysed reaction is 2 a plastoquinone + 4 hnu + 2 H2O = 2 a plastoquinol + O2. Functionally, photosystem II (PSII) is a light-driven water:plastoquinone oxidoreductase that uses light energy to abstract electrons from H(2)O, generating O(2) and a proton gradient subsequently used for ATP formation. It consists of a core antenna complex that captures photons, and an electron transfer chain that converts photonic excitation into a charge separation. The D1/D2 (PsbA/PsbD) reaction center heterodimer binds P680, the primary electron donor of PSII as well as several subsequent electron acceptors. In Nymphaea alba (White water-lily), this protein is Photosystem II protein D1.